Here is a 338-residue protein sequence, read N- to C-terminus: Ketol-acid reductoisomerase (NADP(+)) (338 aa).

A KARI N-terminal Rossmann domain is found at 1–181 (MKVYYDKDAD…GGTKGGVIET (181 aa)). NADP(+)-binding positions include 24–27 (YGSQ), arginine 47, and serine 52. Histidine 107 is an active-site residue. Glycine 133 serves as a coordination point for NADP(+). A KARI C-terminal knotted domain is found at 182 to 327 (NFREETETDL…GQLRDMMPWI (146 aa)). Mg(2+) contacts are provided by aspartate 190, glutamate 194, glutamate 226, and glutamate 230. Serine 251 serves as a coordination point for substrate.

This sequence belongs to the ketol-acid reductoisomerase family. The cofactor is Mg(2+).

The enzyme catalyses (2R)-2,3-dihydroxy-3-methylbutanoate + NADP(+) = (2S)-2-acetolactate + NADPH + H(+). The catalysed reaction is (2R,3R)-2,3-dihydroxy-3-methylpentanoate + NADP(+) = (S)-2-ethyl-2-hydroxy-3-oxobutanoate + NADPH + H(+). It functions in the pathway amino-acid biosynthesis; L-isoleucine biosynthesis; L-isoleucine from 2-oxobutanoate: step 2/4. The protein operates within amino-acid biosynthesis; L-valine biosynthesis; L-valine from pyruvate: step 2/4. Its function is as follows. Involved in the biosynthesis of branched-chain amino acids (BCAA). Catalyzes an alkyl-migration followed by a ketol-acid reduction of (S)-2-acetolactate (S2AL) to yield (R)-2,3-dihydroxy-isovalerate. In the isomerase reaction, S2AL is rearranged via a Mg-dependent methyl migration to produce 3-hydroxy-3-methyl-2-ketobutyrate (HMKB). In the reductase reaction, this 2-ketoacid undergoes a metal-dependent reduction by NADPH to yield (R)-2,3-dihydroxy-isovalerate. The sequence is that of Ketol-acid reductoisomerase (NADP(+)) from Dechloromonas aromatica (strain RCB).